A 328-amino-acid polypeptide reads, in one-letter code: Opticin (328 aa).

Positions 1–19 are cleaved as a signal peptide; sequence MKFLAFLSLLSLVLQKAET. Residue N46 is glycosylated (N-linked (GlcNAc...) asparagine). The residue at position 69 (Y69) is a Sulfotyrosine. 2 N-linked (GlcNAc...) asparagine glycosylation sites follow: N80 and N101. Residues 112-149 enclose the LRRNT domain; the sequence is LLNSQSSHGLPTCLVCVCLGSSVYCDDADLENIPPLPQ. LRR repeat units lie at residues 150-171, 174-195, 198-219, 244-265, 266-286, and 296-316; these read MTTYLYARFNHISHIQAGDFKG, KLRRIDLSGNSISSIHNDALRL, ALQDLILPENQLAALPVLPSGI, KLQFLYLANNMLDSIPGPLPLS, LRSLHLQNNMIETMESDTFCD, and QLEDIRLDGNPINLSLFPEAY. C285 and C318 are oxidised to a cystine. N-linked (GlcNAc...) asparagine glycosylation is present at N308.

Belongs to the small leucine-rich proteoglycan (SLRP) family. SLRP class III subfamily. Homodimer. Post-translationally, O-glycosylated. In terms of processing, sulfated on tyrosine residues. Proteolytically cleaved by MMP1, MMP2, MMP3, MMP7, MMP8, MMP9, ADAMTS4, and ADAMTS5. Proteolytically cleaved by MMP13. In terms of tissue distribution, expressed in cartilage (at protein level). Expressed in the vitreous collagen, inner limiting membrane, lens capsule, trabecular meshwork, anterior surface of the iris, the area adjacent to the nonpigmented ciliary epithelium, and weakly expressed in the retina of the eye (at protein level). Expressed in the nonpigmented ciliary epithelium of the eye.

The protein localises to the secreted. It localises to the extracellular space. It is found in the extracellular matrix. Functionally, inhibits angiogenesis in the vitreous humor of the eye, and therefore represses neovascularization. Binds collagen fibrils. May be involved in collagen fiber organization via regulation of other members of the small leucine-rich repeat proteoglycan superfamily. In Mus musculus (Mouse), this protein is Opticin (Optc).